Reading from the N-terminus, the 558-residue chain is Arginine--tRNA ligase (558 aa).

The short motif at 134–144 (ANPTGPMVLVQ) is the 'HIGH' region element.

Belongs to the class-I aminoacyl-tRNA synthetase family. As to quaternary structure, monomer.

Its subcellular location is the cytoplasm. It catalyses the reaction tRNA(Arg) + L-arginine + ATP = L-arginyl-tRNA(Arg) + AMP + diphosphate. The chain is Arginine--tRNA ligase from Symbiobacterium thermophilum (strain DSM 24528 / JCM 14929 / IAM 14863 / T).